The sequence spans 249 residues: ATP synthase subunit a (249 aa).

5 helical membrane-spanning segments follow: residues 33–53, 92–112, 131–151, 196–216, and 217–237; these read GQVF…SLLA, VPFI…GALI, INTT…AGFS, LVVA…AMIL, and GLFT…SYIG.

The protein belongs to the ATPase A chain family. F-type ATPases have 2 components, CF(1) - the catalytic core - and CF(0) - the membrane proton channel. CF(1) has five subunits: alpha(3), beta(3), gamma(1), delta(1), epsilon(1). CF(0) has four main subunits: a, b, b' and c.

Its subcellular location is the cellular thylakoid membrane. Key component of the proton channel; it plays a direct role in the translocation of protons across the membrane. The chain is ATP synthase subunit a from Synechococcus elongatus (strain ATCC 33912 / PCC 7942 / FACHB-805) (Anacystis nidulans R2).